The following is an 80-amino-acid chain: Large ribosomal subunit protein uL30 (80 aa).

It belongs to the universal ribosomal protein uL30 family. As to quaternary structure, part of the 50S ribosomal subunit.

The polypeptide is Large ribosomal subunit protein uL30 (Vesicomyosocius okutanii subsp. Calyptogena okutanii (strain HA)).